Reading from the N-terminus, the 95-residue chain is MSIKPLHDRIVVKPIEADEVSPGGIVIPDSAKEKSTKGEVIAVGAGKPLDNGNVRTPCVKVGEKVIYGQYAGSTYKAEGVEYKVLREDDILAIIG.

This sequence belongs to the GroES chaperonin family. Heptamer of 7 subunits arranged in a ring. Interacts with the chaperonin GroEL.

It localises to the cytoplasm. In terms of biological role, together with the chaperonin GroEL, plays an essential role in assisting protein folding. The GroEL-GroES system forms a nano-cage that allows encapsulation of the non-native substrate proteins and provides a physical environment optimized to promote and accelerate protein folding. GroES binds to the apical surface of the GroEL ring, thereby capping the opening of the GroEL channel. This is Co-chaperonin GroES from Xylella fastidiosa (strain M23).